The primary structure comprises 285 residues: Protein HEXIM1 (285 aa).

2 disordered regions span residues 1 to 56 (MSEV…QNPG) and 132 to 196 (LMED…LQKD). Residues 23–36 (GGWHHPVEREEHPV) show a composition bias toward basic and acidic residues. Over residues 168-180 (TDDDLEEEEDEAG) the composition is skewed to acidic residues. The stretch at 213-284 (SKQDLIKEYL…QEGKQVAADS (72 aa)) forms a coiled coil.

Belongs to the HEXIM family. In terms of assembly, homooligomer and heterooligomer. Core component of the 7SK RNP complex.

It is found in the nucleus. The protein localises to the cytoplasm. Functionally, transcriptional regulator which functions as a general RNA polymerase II transcription inhibitor. Core component of the 7SK RNP complex: in cooperation with 7SK snRNA sequesters P-TEFb in a large inactive 7SK snRNP complex preventing RNA polymerase II phosphorylation and subsequent transcriptional elongation. Plays a role in the regulation of DNA virus-mediated innate immune response by assembling into the HDP-RNP complex, a complex that serves as a platform for IRF3 phosphorylation and subsequent innate immune response activation through the cGAS-STING pathway. The chain is Protein HEXIM1 (hexim1) from Xenopus laevis (African clawed frog).